The primary structure comprises 626 residues: Janus kinase and microtubule-interacting protein 1 (626 aa).

The interval 1-22 is disordered; the sequence is MSKKGRSKGEKPEMETDAVQMA. The tract at residues 1–365 is mediates association with microtubules; the sequence is MSKKGRSKGE…KIKNLTRENV (365 aa). 2 coiled-coil regions span residues 19 to 255 and 284 to 413; these read VQMA…EAER and ERDV…DDLS. The mediates interaction with TYK2 and GABBR1 stretch occupies residues 365-626; it reads VEMKEKLSAQ…ILFEPKLKFM (262 aa). S382 is subject to Phosphoserine. The segment covering 452 to 461 has biased composition (polar residues); sequence ETLSETSYNT. Residues 452–477 are disordered; that stretch reads ETLSETSYNTDRTDRTPATPEEDLDD. T470 is modified (phosphothreonine). Residues 490–604 are a coiled coil; the sequence is QLTREYQALQ…EFRVLELEVR (115 aa).

The protein belongs to the JAKMIP family. In terms of assembly, homodimer. Forms a complex with GABBR1 and KIF5B/kinesin-1. Interacts with JAK1 and TYK2. In terms of tissue distribution, predominantly expressed in neural tissues and lymphoid cells (at protein level). Isoform 2, isoform 3 and isoform 4 are specifically expressed in brain and retina. Isoform 1 and isoform 5 are also detected in liver, lung and skeletal muscle. Also detected in testis and to a lower extent spleen and intestine.

It localises to the cytoplasm. It is found in the cytoskeleton. Its subcellular location is the membrane. Associates with microtubules and may play a role in the microtubule-dependent transport of the GABA-B receptor. May play a role in JAK1 signaling and regulate microtubule cytoskeleton rearrangements. The sequence is that of Janus kinase and microtubule-interacting protein 1 (JAKMIP1) from Homo sapiens (Human).